The chain runs to 340 residues: S-adenosylmethionine:tRNA ribosyltransferase-isomerase (340 aa).

Belongs to the QueA family. In terms of assembly, monomer.

Its subcellular location is the cytoplasm. It carries out the reaction 7-aminomethyl-7-carbaguanosine(34) in tRNA + S-adenosyl-L-methionine = epoxyqueuosine(34) in tRNA + adenine + L-methionine + 2 H(+). It functions in the pathway tRNA modification; tRNA-queuosine biosynthesis. Its function is as follows. Transfers and isomerizes the ribose moiety from AdoMet to the 7-aminomethyl group of 7-deazaguanine (preQ1-tRNA) to give epoxyqueuosine (oQ-tRNA). The polypeptide is S-adenosylmethionine:tRNA ribosyltransferase-isomerase (Vesicomyosocius okutanii subsp. Calyptogena okutanii (strain HA)).